The primary structure comprises 253 residues: Phosphoadenosine 5'-phosphosulfate reductase (253 aa).

Cys242 acts as the Nucleophile; cysteine thiosulfonate intermediate in catalysis.

This sequence belongs to the PAPS reductase family. CysH subfamily.

Its subcellular location is the cytoplasm. It catalyses the reaction [thioredoxin]-disulfide + sulfite + adenosine 3',5'-bisphosphate + 2 H(+) = [thioredoxin]-dithiol + 3'-phosphoadenylyl sulfate. Its pathway is sulfur metabolism; hydrogen sulfide biosynthesis; sulfite from sulfate: step 3/3. Catalyzes the formation of sulfite from phosphoadenosine 5'-phosphosulfate (PAPS) using thioredoxin as an electron donor. The sequence is that of Phosphoadenosine 5'-phosphosulfate reductase from Vibrio cholerae serotype O1 (strain ATCC 39541 / Classical Ogawa 395 / O395).